A 99-amino-acid polypeptide reads, in one-letter code: Glycine-rich protein (99 aa).

The signal sequence occupies residues 1 to 18 (MKSMIAVLLLALVATSMA).

Belongs to the non-disulfide-bridged peptide (NDBP) superfamily. Expressed by the venom gland.

The protein localises to the secreted. This chain is Glycine-rich protein, found in Lychas mucronatus (Chinese swimming scorpion).